The following is a 273-amino-acid chain: Putative ABC transporter ATP-binding protein DVU_1056 (273 aa).

The 233-residue stretch at 10-242 (LSLDDIHFTY…IHHGGEVAHE (233 aa)) folds into the ABC transporter domain. ATP is bound at residue 44–51 (GHNGSGKT). The interval 234-273 (HHGGEVAHEHPSRGCCHQHDGSHHHAGHDDDHPHTSQTTE) is disordered. The segment covering 235–267 (HGGEVAHEHPSRGCCHQHDGSHHHAGHDDDHPH) has biased composition (basic and acidic residues).

This sequence belongs to the ABC transporter superfamily.

It is found in the cell inner membrane. Probably part of an ABC transporter complex. Responsible for energy coupling to the transport system. The chain is Putative ABC transporter ATP-binding protein DVU_1056 from Nitratidesulfovibrio vulgaris (strain ATCC 29579 / DSM 644 / CCUG 34227 / NCIMB 8303 / VKM B-1760 / Hildenborough) (Desulfovibrio vulgaris).